The sequence spans 550 residues: Luciferin 4-monooxygenase (550 aa).

The Microbody targeting signal motif lies at Ser548–Leu550.

The protein belongs to the ATP-dependent AMP-binding enzyme family. It depends on Mg(2+) as a cofactor.

It is found in the peroxisome. It carries out the reaction firefly D-luciferin + ATP + O2 = firefly oxyluciferin + hnu + AMP + CO2 + diphosphate. Its function is as follows. Produces green light with a wavelength of 562 nm. The sequence is that of Luciferin 4-monooxygenase from Photinus pyralis (Common eastern firefly).